The following is a 447-amino-acid chain: Probable ethanolamine kinase B (447 aa).

Residues 178–208 are compositionally biased toward low complexity; the sequence is STTISTSTSTSTSTSSTSPSTSPSLENSTLS. A disordered region spans residues 178-217; the sequence is STTISTSTSTSTSTSSTSPSTSPSLENSTLSPRNMNTQTS.

It belongs to the choline/ethanolamine kinase family.

The protein localises to the cytoplasm. The enzyme catalyses ethanolamine + ATP = phosphoethanolamine + ADP + H(+). The protein operates within phospholipid metabolism; phosphatidylethanolamine biosynthesis; phosphatidylethanolamine from ethanolamine: step 1/3. In terms of biological role, highly specific for ethanolamine phosphorylation. May be a rate-controlling step in phosphatidylethanolamine biosynthesis. In Dictyostelium discoideum (Social amoeba), this protein is Probable ethanolamine kinase B (etnkB).